The following is a 62-amino-acid chain: Delta-theraphotoxin-Cg1a 3 (62 aa).

The signal sequence occupies residues 1–21; that stretch reads MKTSILFVIFSLALVFALSPA. Residues 22–29 constitute a propeptide that is removed on maturation; the sequence is TEIEETDR. 3 cysteine pairs are disulfide-bonded: Cys-31–Cys-46, Cys-38–Cys-51, and Cys-45–Cys-58.

It belongs to the neurotoxin 10 (Hwtx-1) family. 33 (Jztx-1) subfamily. As to expression, expressed by the venom gland.

It localises to the secreted. Its function is as follows. Moderately inhibits voltage-gated sodium channels and weakly inhibits voltage-gated potassium channel. Inhibits the inactivation of rat Nav1.2/SCN2A (IC(50)=870 nM), rat Nav1.3/SCN3A (IC(50)=845 nM), rat Nav1.4/SCN4A (IC(50)=339 nM), human Nav1.5/SCN5A (IC(50)=335 nM) and human Nav1.7/SCN9A sodium channels (IC(50)=348 nM). The toxin delays the inactivation of sodium channels without affecting the activation and steady-state inactivation kinetics in the physiological range of voltages. Site-directed mutagenesis of the sodium channel indicates that the toxin interacts with site 3 located at the extracellular S3-S4 linker of domain IV. On potassium channels, it inhibits activation of channels with an IC(50) of 8.05 uM through a voltage sensor-trapping mechanism. It increases muscle contraction in several assays (mouse phrenic nerve-diaphragm, toad heart, rat vas deferens) and is suggested to act both presynaptically and postsynaptically. The polypeptide is Delta-theraphotoxin-Cg1a 3 (Chilobrachys guangxiensis (Chinese earth tiger tarantula)).